Consider the following 945-residue polypeptide: Isoleucine--tRNA ligase (945 aa).

Positions 66 to 76 (PYANGDIHLGH) match the 'HIGH' region motif. Position 581 (glutamate 581) interacts with L-isoleucyl-5'-AMP. The 'KMSKS' region motif lies at 622–626 (KMSKS). Lysine 625 lines the ATP pocket. Zn(2+)-binding residues include cysteine 908, cysteine 911, cysteine 928, and cysteine 931.

Belongs to the class-I aminoacyl-tRNA synthetase family. IleS type 1 subfamily. Monomer. It depends on Zn(2+) as a cofactor.

It localises to the cytoplasm. It carries out the reaction tRNA(Ile) + L-isoleucine + ATP = L-isoleucyl-tRNA(Ile) + AMP + diphosphate. Functionally, catalyzes the attachment of isoleucine to tRNA(Ile). As IleRS can inadvertently accommodate and process structurally similar amino acids such as valine, to avoid such errors it has two additional distinct tRNA(Ile)-dependent editing activities. One activity is designated as 'pretransfer' editing and involves the hydrolysis of activated Val-AMP. The other activity is designated 'posttransfer' editing and involves deacylation of mischarged Val-tRNA(Ile). The chain is Isoleucine--tRNA ligase from Burkholderia orbicola (strain MC0-3).